We begin with the raw amino-acid sequence, 279 residues long: Ribosomal RNA small subunit methyltransferase J (279 aa).

S-adenosyl-L-methionine is bound by residues 138-139 and D194; that span reads ER.

It belongs to the methyltransferase superfamily. RsmJ family.

It is found in the cytoplasm. It catalyses the reaction guanosine(1516) in 16S rRNA + S-adenosyl-L-methionine = N(2)-methylguanosine(1516) in 16S rRNA + S-adenosyl-L-homocysteine + H(+). Specifically methylates the guanosine in position 1516 of 16S rRNA. This is Ribosomal RNA small subunit methyltransferase J from Acinetobacter baumannii (strain SDF).